We begin with the raw amino-acid sequence, 352 residues long: uncharacterized protein (352 aa).

Positions 1-22 (MIFKKTILIFIISFFFISISFA) are cleaved as a signal peptide. Residues 25–47 (SSSSSSSSSSSSSSWSSSESSSS) are compositionally biased toward low complexity. Positions 25-49 (SSSSSSSSSSSSSSWSSSESSSSPA) are disordered. N-linked (GlcNAc...) asparagine glycosylation is found at Asn76, Asn110, Asn182, Asn212, and Asn223.

The protein localises to the secreted. This is an uncharacterized protein from Dictyostelium discoideum (Social amoeba).